The following is a 3801-amino-acid chain: Lysosomal-trafficking regulator (3801 aa).

The tract at residues 148 to 173 (KITHRYSVRDARKTQLSTSDSEANSD) is disordered. The residue at position 164 (S164) is a Phosphoserine. Residue T165 is modified to Phosphothreonine. Phosphoserine is present on S166. Residues 662-700 (ELSSSLSSPSYRFQGILPSSGSEDLLWKWDALKAYQNFV) form a WD 1 repeat. The span at 1181 to 1190 (AMTEKSHQSA) shows a compositional bias: basic and acidic residues. Disordered stretches follow at residues 1181–1203 (AMTEKSHQSAEELSSQPGDFSEE) and 1221–1256 (YEADSESNPEDGETQDDGVDLKSETEGFSASSSPND). Positions 1221 to 1238 (YEADSESNPEDGETQDDG) are enriched in acidic residues. Polar residues predominate over residues 1246-1256 (EGFSASSSPND). 2 positions are modified to phosphoserine: S1509 and S1510. The stretch at 1582–1626 (SQENIFLPSKWQHLVLTYLQQPQGKRRIHGKISIWVSGQRKPDVT) is one WD 2 repeat. 5 positions are modified to phosphoserine: S2105, S2124, S2213, S2217, and S2264. Over residues 2205–2215 (KQLGAEPRSED) the composition is skewed to basic and acidic residues. The segment at 2205-2224 (KQLGAEPRSEDDSPGDESCP) is disordered. Residues 3009–3115 (AASESIRVNR…VRDDVYHNIL (107 aa)) enclose the BEACH-type PH domain. In terms of domain architecture, BEACH spans 3120–3422 (PNLLEYGNIT…QLFHMAHVSR (303 aa)). WD repeat units follow at residues 3563 to 3602 (SQQYQVTSCAWVPDSCQLFTGSKCGVITAYTNRFTSSTPS), 3614 to 3653 (GHTEEITSLFVCKPYSILISVSRDGTCIIWDLNRLCYVQS), 3656 to 3699 (GHKS…VGHV), 3700 to 3744 (HCRE…PVRE), and 3749 to 3788 (KSNKPIISLTFSCDGHHLYTANSDGTVIAWCRKDQQRLKQ).

As to quaternary structure, interacts with CPAP, LIP8 and ZNF521. As to expression, abundantly expressed in adult and fetal thymus, peripheral blood leukocytes, bone marrow and several regions of the adult brain.

It is found in the cytoplasm. Adapter protein that regulates and/or fission of intracellular vesicles such as lysosomes. Might regulate trafficking of effectors involved in exocytosis. In cytotoxic T-cells and natural killer (NK) cells, has role in the regulation of size, number and exocytosis of lytic granules. In macrophages and dendritic cells, regulates phagosome maturation by controlling the conversion of early phagosomal compartments into late phagosomes. In macrophages and dendritic cells, specifically involved in TLR3- and TLR4-induced production of pro-inflammatory cytokines by regulating the endosomal TLR3- TICAM1/TRIF and TLR4- TICAM1/TRIF signaling pathways. The protein is Lysosomal-trafficking regulator (LYST) of Homo sapiens (Human).